We begin with the raw amino-acid sequence, 150 residues long: Transcriptional repressor NrdR (150 aa).

A zinc finger lies at 3-34; the sequence is CPFCNFEESKVVDSRATDDNTTIRRRRECLNC. The region spanning 49–139 is the ATP-cone domain; that stretch reads VLVVKKDLAR…VYRQFKDINT (91 aa).

Belongs to the NrdR family. It depends on Zn(2+) as a cofactor.

Functionally, negatively regulates transcription of bacterial ribonucleotide reductase nrd genes and operons by binding to NrdR-boxes. In Clostridium botulinum (strain Eklund 17B / Type B), this protein is Transcriptional repressor NrdR.